The primary structure comprises 435 residues: Trigger factor (435 aa).

A PPIase FKBP-type domain is found at G161–P246.

This sequence belongs to the FKBP-type PPIase family. Tig subfamily.

Its subcellular location is the cytoplasm. It catalyses the reaction [protein]-peptidylproline (omega=180) = [protein]-peptidylproline (omega=0). Functionally, involved in protein export. Acts as a chaperone by maintaining the newly synthesized protein in an open conformation. Functions as a peptidyl-prolyl cis-trans isomerase. The chain is Trigger factor from Colwellia psychrerythraea (strain 34H / ATCC BAA-681) (Vibrio psychroerythus).